Here is a 614-residue protein sequence, read N- to C-terminus: Cathepsin F (614 aa).

Positions 1–20 are cleaved as a signal peptide; the sequence is MRLFAAATVALVLLLGQAAG. The propeptide at 21–393 is activation peptide; sequence EELAEERAGQ…AAVVPAYHGE (373 aa). The tract at residues 25 to 50 is disordered; it reads EERAGQAQGDAESTESSETTTDQAVS. Low complexity predominate over residues 29–45; sequence GQAQGDAESTESSETTT. A glycan (N-linked (GlcNAc...) asparagine) is linked at asparagine 151. 2 disulfide bridges follow: cysteine 415–cysteine 456 and cysteine 449–cysteine 489. The active site involves cysteine 418. N-linked (GlcNAc...) asparagine glycans are attached at residues asparagine 492 and asparagine 510. Cysteine 548 and cysteine 602 are joined by a disulfide. Catalysis depends on residues histidine 555 and asparagine 581.

This sequence belongs to the peptidase C1 family.

It carries out the reaction The recombinant enzyme cleaves synthetic substrates with Phe and Leu (better than Val) in P2, with high specificity constant (kcat/Km) comparable to that of cathepsin L.. Functionally, may have a role in autophagic cell death. This is Cathepsin F from Drosophila melanogaster (Fruit fly).